A 127-amino-acid polypeptide reads, in one-letter code: Fluoride-specific ion channel FluC (127 aa).

4 helical membrane-spanning segments follow: residues 7–27 (LFLI…LTLL), 37–57 (FGTL…LAMF), 70–90 (FFVT…AEVI), and 102–122 (ITIT…GVFI). Residues Gly77 and Thr80 each contribute to the Na(+) site.

Belongs to the fluoride channel Fluc/FEX (TC 1.A.43) family.

Its subcellular location is the cell inner membrane. The catalysed reaction is fluoride(in) = fluoride(out). With respect to regulation, na(+) is not transported, but it plays an essential structural role and its presence is essential for fluoride channel function. Fluoride-specific ion channel. Important for reducing fluoride concentration in the cell, thus reducing its toxicity. In Histophilus somni (strain 129Pt) (Haemophilus somnus), this protein is Fluoride-specific ion channel FluC.